Consider the following 349-residue polypeptide: Protein DMR6-LIKE OXYGENASE 1 (349 aa).

One can recognise a Fe2OG dioxygenase domain in the interval 197–296; sequence HAQHMAFNYY…RLSIPTFYFP (100 aa). Position 206 (Tyr206) interacts with 2-oxoglutarate. Fe cation is bound by residues His221, Asp223, and His277. Arg287 and Ser289 together coordinate 2-oxoglutarate.

The protein belongs to the iron/ascorbate-dependent oxidoreductase family. L-ascorbate is required as a cofactor. It depends on Fe(2+) as a cofactor.

It catalyses the reaction salicylate + NADH + O2 + H(+) = 2,3-dihydroxybenzoate + NAD(+) + H2O. Converts salicylic acid (SA) to both 2,3-dihydroxybenzoic acid (2,3-DHBA) and 2,5-DHBA in vitro but only 2,3-DHBA in vivo. Component of a negative feedback regulation system of SA levels during senescence. Regulates both onset and progression of leaf senescence. Negative regulator of defense against Hyaloperonospora arabidopsidis. In terms of biological role, (Microbial infection) Confers susceptibility to the downy mildew pathogen Hyaloperonospora arabidopsidis. This is Protein DMR6-LIKE OXYGENASE 1 from Arabidopsis thaliana (Mouse-ear cress).